Consider the following 464-residue polypeptide: Glycine receptor subunit alpha-3 (464 aa).

An N-terminal signal peptide occupies residues 1 to 33 (MAHVRHFRTLVSGFYFWEAALLLSLVATKETDS). At 34–255 (ARSRSAPMSP…RFHLERQMGY (222 aa)) the chain is on the extracellular side. The N-linked (GlcNAc...) asparagine glycan is linked to Asn71. The cysteines at positions 171 and 185 are disulfide-linked. Zn(2+)-binding residues include Glu225 and Asp227. Cys231 and Cys242 are disulfide-bonded. 235-240 (YNTGKF) contacts strychnine. Residue His248 coordinates Zn(2+). Residues 256 to 277 (YLIQMYIPSLLIVILSWVSFWI) form a helical membrane-spanning segment. Over 278-282 (NMDAA) the chain is Cytoplasmic. A helical transmembrane segment spans residues 283-303 (PARVALGITTVLTMTTQSSGS). Topologically, residues 304 to 314 (RASLPKVSYVK) are extracellular. The helical transmembrane segment at 315 to 335 (AIDIWMAVCLLFVFSALLEYA) threads the bilayer. At 336-430 (AVNFVSRQHK…FIDRAKKIDT (95 aa)) the chain is on the cytoplasmic side. Phosphoserine is present on residues Ser370 and Ser379. A helical membrane pass occupies residues 431 to 451 (ISRACFPLAFLIFNIFYWVIY). The Extracellular portion of the chain corresponds to 452–464 (KILRHEDIHQQQD).

The protein belongs to the ligand-gated ion channel (TC 1.A.9) family. Glycine receptor (TC 1.A.9.3) subfamily. GLRA3 sub-subfamily. As to quaternary structure, homopentamer (in vitro). Heteropentamer composed of GLRA3 and GLRB. Both homopentamers and heteropentamers form functional ion channels, but their characteristics are subtly different. In terms of processing, phosphorylated by PKA; this causes down-regulation of channel activity. As to expression, widely distributed throughout the central nervous system.

It is found in the postsynaptic cell membrane. Its subcellular location is the perikaryon. The protein resides in the cell projection. It localises to the dendrite. The protein localises to the synapse. It is found in the cell membrane. The catalysed reaction is chloride(in) = chloride(out). Glycine receptors are ligand-gated chloride channels. Channel opening is triggered by extracellular glycine. Channel characteristics depend on the subunit composition; heteropentameric channels display faster channel closure. Plays an important role in the down-regulation of neuronal excitability. Contributes to the generation of inhibitory postsynaptic currents. Contributes to increased pain perception in response to increased prostaglandin E2 levels. Plays a role in cellular responses to ethanol. In Homo sapiens (Human), this protein is Glycine receptor subunit alpha-3 (GLRA3).